Reading from the N-terminus, the 631-residue chain is uncharacterized protein (631 aa).

This is an uncharacterized protein from Escherichia coli (strain K12).